Consider the following 234-residue polypeptide: Glucosamine-6-phosphate deaminase (234 aa).

Residue Asp63 is the Proton acceptor; for enolization step of the active site. Asn129 (for ring-opening step) is an active-site residue. His131 functions as the Proton acceptor; for ring-opening step in the catalytic mechanism. Catalysis depends on Glu136, which acts as the For ring-opening step.

This sequence belongs to the glucosamine/galactosamine-6-phosphate isomerase family. NagB subfamily.

The enzyme catalyses alpha-D-glucosamine 6-phosphate + H2O = beta-D-fructose 6-phosphate + NH4(+). Its pathway is amino-sugar metabolism; N-acetylneuraminate degradation; D-fructose 6-phosphate from N-acetylneuraminate: step 5/5. Catalyzes the reversible isomerization-deamination of glucosamine 6-phosphate (GlcN6P) to form fructose 6-phosphate (Fru6P) and ammonium ion. This is Glucosamine-6-phosphate deaminase from Listeria monocytogenes serotype 4b (strain CLIP80459).